A 183-amino-acid polypeptide reads, in one-letter code: Cell division protein SepF (183 aa).

The interval 149-183 is disordered; the sequence is SSEESAAPSVMAREEEATAPAAPSPAWGTQDAING.

It belongs to the SepF family. In terms of assembly, homodimer. Interacts with FtsZ.

It is found in the cytoplasm. Cell division protein that is part of the divisome complex and is recruited early to the Z-ring. Probably stimulates Z-ring formation, perhaps through the cross-linking of FtsZ protofilaments. Its function overlaps with FtsA. The chain is Cell division protein SepF from Synechococcus sp. (strain RCC307).